A 21-amino-acid chain; its full sequence is Dart gland peptide (21 aa).

The segment at 1 to 21 (SINNTGGSGNRRLDKNGFAGQ) is disordered. The N-linked (GlcNAc...) asparagine glycan is linked to Asn-3.

The protein localises to the secreted. The protein is Dart gland peptide of Cornu aspersum (Brown garden snail).